The following is a 549-amino-acid chain: Glucose-6-phosphate isomerase (549 aa).

E355 acts as the Proton donor in catalysis. Residues H387 and K515 contribute to the active site.

It belongs to the GPI family.

Its subcellular location is the cytoplasm. It catalyses the reaction alpha-D-glucose 6-phosphate = beta-D-fructose 6-phosphate. The protein operates within carbohydrate biosynthesis; gluconeogenesis. It functions in the pathway carbohydrate degradation; glycolysis; D-glyceraldehyde 3-phosphate and glycerone phosphate from D-glucose: step 2/4. Its function is as follows. Catalyzes the reversible isomerization of glucose-6-phosphate to fructose-6-phosphate. The sequence is that of Glucose-6-phosphate isomerase from Haemophilus influenzae (strain 86-028NP).